The chain runs to 339 residues: DNA-directed RNA polymerase subunit alpha (339 aa).

The tract at residues 1 to 235 is alpha N-terminal domain (alpha-NTD); the sequence is MVIQRNWQSL…DQLQLFINFE (235 aa). The tract at residues 251–339 is alpha C-terminal domain (alpha-CTD); that stretch reads FNRNLLRKVD…DLAKRLEEPF (89 aa).

Belongs to the RNA polymerase alpha chain family. In terms of assembly, homodimer. The RNAP catalytic core consists of 2 alpha, 1 beta, 1 beta' and 1 omega subunit. When a sigma factor is associated with the core the holoenzyme is formed, which can initiate transcription.

The catalysed reaction is RNA(n) + a ribonucleoside 5'-triphosphate = RNA(n+1) + diphosphate. DNA-dependent RNA polymerase catalyzes the transcription of DNA into RNA using the four ribonucleoside triphosphates as substrates. This chain is DNA-directed RNA polymerase subunit alpha, found in Granulibacter bethesdensis (strain ATCC BAA-1260 / CGDNIH1).